The chain runs to 342 residues: Heat-inducible transcription repressor HrcA (342 aa).

This sequence belongs to the HrcA family.

In terms of biological role, negative regulator of class I heat shock genes (grpE-dnaK-dnaJ and groELS operons). Prevents heat-shock induction of these operons. This Geobacter sulfurreducens (strain ATCC 51573 / DSM 12127 / PCA) protein is Heat-inducible transcription repressor HrcA.